The chain runs to 380 residues: Cytochrome b (380 aa).

The next 4 helical transmembrane spans lie at 34 to 54 (FGSL…LLAM), 78 to 99 (WLIR…YLHI), 114 to 134 (WNTG…GYVL), and 179 to 199 (FFAL…IHLT). 2 residues coordinate heme b: His-84 and His-98. The heme b site is built by His-183 and His-197. A ubiquinone is bound at residue His-202. 4 helical membrane-spanning segments follow: residues 227–247 (LKDI…ALFS), 289–309 (LGGV…PFLH), 321–341 (LSQL…WVGS), and 348–368 (FIII…ILFP).

This sequence belongs to the cytochrome b family. The cytochrome bc1 complex contains 11 subunits: 3 respiratory subunits (MT-CYB, CYC1 and UQCRFS1), 2 core proteins (UQCRC1 and UQCRC2) and 6 low-molecular weight proteins (UQCRH/QCR6, UQCRB/QCR7, UQCRQ/QCR8, UQCR10/QCR9, UQCR11/QCR10 and a cleavage product of UQCRFS1). This cytochrome bc1 complex then forms a dimer. Requires heme b as cofactor.

The protein localises to the mitochondrion inner membrane. Component of the ubiquinol-cytochrome c reductase complex (complex III or cytochrome b-c1 complex) that is part of the mitochondrial respiratory chain. The b-c1 complex mediates electron transfer from ubiquinol to cytochrome c. Contributes to the generation of a proton gradient across the mitochondrial membrane that is then used for ATP synthesis. The protein is Cytochrome b (MT-CYB) of Macronectes halli (Hall's giant petrel).